The following is a 78-amino-acid chain: uncharacterized protein (78 aa).

The chain crosses the membrane as a helical span at residues 21–43 (SPFLFGAPLVGGLLGGFLGSALF).

The protein localises to the membrane. This is an uncharacterized protein from Bacillus subtilis (strain 168).